The following is a 255-amino-acid chain: Adenosine 5'-phosphosulfate reductase (255 aa).

The tract at residues 1-39 is disordered; it reads MMTAEVRTPEQGGGPLTTEPRAPRSAPGHADASAPAFGP. Positions 137, 138, 220, and 223 each coordinate [4Fe-4S] cluster. Cys246 functions as the Nucleophile; cysteine thiosulfonate intermediate in the catalytic mechanism.

Belongs to the PAPS reductase family. CysH subfamily. Requires [4Fe-4S] cluster as cofactor.

It localises to the cytoplasm. The catalysed reaction is [thioredoxin]-disulfide + sulfite + AMP + 2 H(+) = adenosine 5'-phosphosulfate + [thioredoxin]-dithiol. It functions in the pathway sulfur metabolism; hydrogen sulfide biosynthesis; sulfite from sulfate. Functionally, catalyzes the formation of sulfite from adenosine 5'-phosphosulfate (APS) using thioredoxin as an electron donor. This is Adenosine 5'-phosphosulfate reductase from Deinococcus radiodurans (strain ATCC 13939 / DSM 20539 / JCM 16871 / CCUG 27074 / LMG 4051 / NBRC 15346 / NCIMB 9279 / VKM B-1422 / R1).